Consider the following 501-residue polypeptide: Glutamyl-tRNA(Gln) amidotransferase subunit A (501 aa).

Catalysis depends on charge relay system residues Lys84 and Ser159. Catalysis depends on Ser183, which acts as the Acyl-ester intermediate.

This sequence belongs to the amidase family. GatA subfamily. Heterotrimer of A, B and C subunits.

It catalyses the reaction L-glutamyl-tRNA(Gln) + L-glutamine + ATP + H2O = L-glutaminyl-tRNA(Gln) + L-glutamate + ADP + phosphate + H(+). In terms of biological role, allows the formation of correctly charged Gln-tRNA(Gln) through the transamidation of misacylated Glu-tRNA(Gln) in organisms which lack glutaminyl-tRNA synthetase. The reaction takes place in the presence of glutamine and ATP through an activated gamma-phospho-Glu-tRNA(Gln). The polypeptide is Glutamyl-tRNA(Gln) amidotransferase subunit A (Streptomyces avermitilis (strain ATCC 31267 / DSM 46492 / JCM 5070 / NBRC 14893 / NCIMB 12804 / NRRL 8165 / MA-4680)).